Consider the following 41-residue polypeptide: Large ribosomal subunit protein bL36B (41 aa).

Belongs to the bacterial ribosomal protein bL36 family.

The sequence is that of Large ribosomal subunit protein bL36B from Neisseria meningitidis serogroup B (strain ATCC BAA-335 / MC58).